We begin with the raw amino-acid sequence, 439 residues long: tRNA-2-methylthio-N(6)-dimethylallyladenosine synthase (439 aa).

Residues 1–117 (MKFYIRTFGC…IGNLVKRALN (117 aa)) form the MTTase N-terminal domain. C10, C46, C80, C153, C157, and C160 together coordinate [4Fe-4S] cluster. Positions 139-371 (PISKHHAWIT…MELQKRINLE (233 aa)) constitute a Radical SAM core domain. Residues 369–436 (NLEENEKYLE…PGPLYGEVVN (68 aa)) enclose the TRAM domain.

Belongs to the methylthiotransferase family. MiaB subfamily. Monomer. The cofactor is [4Fe-4S] cluster.

Its subcellular location is the cytoplasm. It carries out the reaction N(6)-dimethylallyladenosine(37) in tRNA + (sulfur carrier)-SH + AH2 + 2 S-adenosyl-L-methionine = 2-methylsulfanyl-N(6)-dimethylallyladenosine(37) in tRNA + (sulfur carrier)-H + 5'-deoxyadenosine + L-methionine + A + S-adenosyl-L-homocysteine + 2 H(+). In terms of biological role, catalyzes the methylthiolation of N6-(dimethylallyl)adenosine (i(6)A), leading to the formation of 2-methylthio-N6-(dimethylallyl)adenosine (ms(2)i(6)A) at position 37 in tRNAs that read codons beginning with uridine. In Petrotoga mobilis (strain DSM 10674 / SJ95), this protein is tRNA-2-methylthio-N(6)-dimethylallyladenosine synthase.